A 257-amino-acid polypeptide reads, in one-letter code: Snake venom serine protease KN8 (257 aa).

An N-terminal signal peptide occupies residues 1-18 (MVLIRVLANLLILQLSYA). A propeptide spanning residues 19–24 (QKSSEL) is cleaved from the precursor. Positions 25–248 (VVGGLPCNIN…HLDWIKSIIA (224 aa)) constitute a Peptidase S1 domain. Intrachain disulfides connect Cys-31–Cys-162, Cys-49–Cys-65, Cys-141–Cys-209, Cys-173–Cys-188, and Cys-199–Cys-224. The Charge relay system role is filled by His-64. N-linked (GlcNAc...) asparagine glycosylation is present at Asn-102. Residue Asp-109 is the Charge relay system of the active site. 2 N-linked (GlcNAc...) asparagine glycosylation sites follow: Asn-120 and Asn-121. Ser-203 acts as the Charge relay system in catalysis.

The protein belongs to the peptidase S1 family. Snake venom subfamily. Monomer. In terms of tissue distribution, expressed by the venom gland.

It localises to the secreted. Functionally, snake venom serine protease that may act in the hemostasis system of the prey. The protein is Snake venom serine protease KN8 of Trimeresurus stejnegeri (Chinese green tree viper).